The sequence spans 234 residues: Zinc finger FYVE domain-containing protein 21 (234 aa).

An FYVE-type zinc finger spans residues D44–H104. Residues C50, C53, C66, C69, C74, C77, C96, and C99 each contribute to the Zn(2+) site. The PH-like stretch occupies residues A107–Q234.

As to quaternary structure, interacts with PTK2/FAK1.

Its subcellular location is the cell junction. It localises to the focal adhesion. The protein localises to the cytoplasmic vesicle. It is found in the endosome. Functionally, plays a role in cell adhesion, and thereby in cell motility which requires repeated formation and disassembly of focal adhesions. Regulates microtubule-induced PTK2/FAK1 dephosphorylation, an event important for focal adhesion disassembly, as well as integrin beta-1/ITGB1 cell surface expression. This Rattus norvegicus (Rat) protein is Zinc finger FYVE domain-containing protein 21 (Zfyve21).